A 431-amino-acid chain; its full sequence is Argininosuccinate lyase (431 aa).

The protein belongs to the lyase 1 family. Argininosuccinate lyase subfamily.

The protein resides in the cytoplasm. The catalysed reaction is 2-(N(omega)-L-arginino)succinate = fumarate + L-arginine. Its pathway is amino-acid biosynthesis; L-arginine biosynthesis; L-arginine from L-ornithine and carbamoyl phosphate: step 3/3. The sequence is that of Argininosuccinate lyase from Stenotrophomonas maltophilia (strain R551-3).